Here is a 207-residue protein sequence, read N- to C-terminus: FMN-dependent NADH:quinone oxidoreductase (207 aa).

FMN contacts are provided by residues Ser10, 16 to 18 (SIS), 96 to 99 (MYNL), and 141 to 144 (SRGG).

This sequence belongs to the azoreductase type 1 family. In terms of assembly, homodimer. FMN serves as cofactor.

The catalysed reaction is 2 a quinone + NADH + H(+) = 2 a 1,4-benzosemiquinone + NAD(+). It catalyses the reaction N,N-dimethyl-1,4-phenylenediamine + anthranilate + 2 NAD(+) = 2-(4-dimethylaminophenyl)diazenylbenzoate + 2 NADH + 2 H(+). Functionally, quinone reductase that provides resistance to thiol-specific stress caused by electrophilic quinones. Its function is as follows. Also exhibits azoreductase activity. Catalyzes the reductive cleavage of the azo bond in aromatic azo compounds to the corresponding amines. The polypeptide is FMN-dependent NADH:quinone oxidoreductase (Nostoc sp. (strain PCC 7120 / SAG 25.82 / UTEX 2576)).